The following is a 303-amino-acid chain: Taste receptor type 2 member 13 (303 aa).

Residues 1-7 lie on the Extracellular side of the membrane; it reads MESALPS. Residues 8–28 form a helical membrane-spanning segment; that stretch reads ILTLVIIAEFIIGNLSNGFIV. Residues 29 to 55 lie on the Cytoplasmic side of the membrane; sequence LINYIDWVSKRELSSVDKLLIILAISR. Residues 56 to 76 form a helical membrane-spanning segment; it reads IGLIWEILVSWFLALHYLAIF. At 77–85 the chain is on the extracellular side; it reads VSGTGLRIM. A helical transmembrane segment spans residues 86 to 106; the sequence is IFSWIVSNHFSLWLATILSIF. The Cytoplasmic segment spans residues 107–128; that stretch reads YLLKIASFSSPAFLYLKWRVNK. The chain crosses the membrane as a helical span at residues 129–149; it reads VILMILLGSLVFLFLNLIQIN. The Extracellular portion of the chain corresponds to 150–184; the sequence is IHIKDWLDRYEGNTTWNFSMSDFVTFSVSVKFTMT. Asparagine 162 and asparagine 166 each carry an N-linked (GlcNAc...) asparagine glycan. Residues 185–205 traverse the membrane as a helical segment; the sequence is MFSLTPFTVALISFSLLIFSL. The Cytoplasmic portion of the chain corresponds to 206-232; sequence QKHLQKMQLNYKGHREPRTKVHTNALK. A helical membrane pass occupies residues 233–253; the sequence is IVISFLLLYASFFLCILISWI. The Extracellular segment spans residues 254-261; that stretch reads SELYQNTA. Residues 262-282 form a helical membrane-spanning segment; the sequence is IYMLCETIGLFYPSSHSFLLI. Over 283-303 the chain is Cytoplasmic; sequence LGNPKLRQAFLLVAAKVWAKR.

This sequence belongs to the G-protein coupled receptor T2R family.

The protein resides in the membrane. Functionally, receptor that may play a role in the perception of bitterness and is gustducin-linked. May play a role in sensing the chemical composition of the gastrointestinal content. The activity of this receptor may stimulate alpha gustducin, mediate PLC-beta-2 activation and lead to the gating of TRPM5. In Pongo pygmaeus (Bornean orangutan), this protein is Taste receptor type 2 member 13 (TAS2R13).